Reading from the N-terminus, the 201-residue chain is Peptidyl-tRNA hydrolase (201 aa).

Tyrosine 14 contacts tRNA. Histidine 19 acts as the Proton acceptor in catalysis. Residues phenylalanine 64, asparagine 66, and asparagine 112 each coordinate tRNA.

The protein belongs to the PTH family. Monomer.

It is found in the cytoplasm. It catalyses the reaction an N-acyl-L-alpha-aminoacyl-tRNA + H2O = an N-acyl-L-amino acid + a tRNA + H(+). Hydrolyzes ribosome-free peptidyl-tRNAs (with 1 or more amino acids incorporated), which drop off the ribosome during protein synthesis, or as a result of ribosome stalling. Its function is as follows. Catalyzes the release of premature peptidyl moieties from peptidyl-tRNA molecules trapped in stalled 50S ribosomal subunits, and thus maintains levels of free tRNAs and 50S ribosomes. This chain is Peptidyl-tRNA hydrolase, found in Rhodopseudomonas palustris (strain BisA53).